Reading from the N-terminus, the 513-residue chain is ATP synthase subunit alpha (513 aa).

Position 169–176 (169–176 (GDRQTGKT)) interacts with ATP.

This sequence belongs to the ATPase alpha/beta chains family. F-type ATPases have 2 components, CF(1) - the catalytic core - and CF(0) - the membrane proton channel. CF(1) has five subunits: alpha(3), beta(3), gamma(1), delta(1), epsilon(1). CF(0) has three main subunits: a(1), b(2) and c(9-12). The alpha and beta chains form an alternating ring which encloses part of the gamma chain. CF(1) is attached to CF(0) by a central stalk formed by the gamma and epsilon chains, while a peripheral stalk is formed by the delta and b chains.

It is found in the cell inner membrane. The enzyme catalyses ATP + H2O + 4 H(+)(in) = ADP + phosphate + 5 H(+)(out). Produces ATP from ADP in the presence of a proton gradient across the membrane. The alpha chain is a regulatory subunit. The protein is ATP synthase subunit alpha of Ralstonia nicotianae (strain ATCC BAA-1114 / GMI1000) (Ralstonia solanacearum).